A 657-amino-acid polypeptide reads, in one-letter code: Broad substrate specificity ATP-binding cassette transporter ABCG2 (657 aa).

The segment at 1–25 is disordered; sequence MSSSNDHVLVPMSQRNKNGLPGMSS. Residues 1–395 are Cytoplasmic-facing; the sequence is MSSSNDHVLV…KNLLGNPQAS (395 aa). In terms of domain architecture, ABC transporter spans 48–285; sequence VKSGFLVRKT…FASAGYHCEP (238 aa). Residues 79-86, 183-189, glutamate 210, and histidine 242 each bind ATP; these read GPTGGGKS and RGISGGE. The region spanning 389–653 is the ABC transmembrane type-2 domain; the sequence is LGNPQASVAQ…TIAYLKLLFL (265 aa). The helical transmembrane segment at 396–416 threads the bilayer; that stretch reads VAQLIVTVILGLIIGALYFGL. Over 417–428 the chain is Extracellular; the sequence is KNDPTGMQNRAG. The chain crosses the membrane as a helical span at residues 429-449; sequence VFFFLTTNQCFTSVSAVELFV. The Cytoplasmic portion of the chain corresponds to 450–477; it reads VEKKLFIHEYISGYYRVSSYFFGKLVSD. Residues 478 to 498 form a helical membrane-spanning segment; it reads LLPMRFLPSVIYTCILYFMLG. Residues 499-506 lie on the Extracellular side of the membrane; the sequence is LKRTVEAF. The chain crosses the membrane as a helical span at residues 507-527; that stretch reads FIMMFTLIMVAYTASSMALAI. The Cytoplasmic portion of the chain corresponds to 528–535; it reads AAGQSVVS. The chain crosses the membrane as a helical span at residues 536 to 556; that stretch reads VATLLMTISFVFMMLFSGLLV. Residues 557–632 are Extracellular-facing; that stretch reads NLRTIGPWLS…LSPWGLWRNH (76 aa). A disulfide bridge connects residues cysteine 592 and cysteine 610. N-linked (GlcNAc...) asparagine glycosylation is found at asparagine 596 and asparagine 600. The chain crosses the membrane as a helical span at residues 633–653; the sequence is VALACMIIIFLTIAYLKLLFL. The Cytoplasmic portion of the chain corresponds to 654–657; the sequence is KKYS.

This sequence belongs to the ABC transporter superfamily. ABCG family. Eye pigment precursor importer (TC 3.A.1.204) subfamily. Homodimer; disulfide-linked. The minimal functional unit is a homodimer, but the major oligomeric form in plasma membrane is a homotetramer with possibility of higher order oligomerization up to homododecamers. Post-translationally, N-glycosylated in brain capillary, kidney and small intestine but not in heart. In terms of processing, N-glycosylated. Glycosylation-deficient ABCG2 is normally expressed and functional. Phosphorylated. Phosphorylation may regulate the localization to the plasma membrane, the homooligomerization and therefore, the activity of the transporter. Highly expressed in brain capillary, kidney and small intestine. Lower expression in heart. Preferentially expressed (at protein level) on the luminal membrane of brain capillaries, in kidney and small intestine.

Its subcellular location is the cell membrane. It is found in the apical cell membrane. The protein resides in the mitochondrion membrane. The catalysed reaction is ATP + H2O + xenobioticSide 1 = ADP + phosphate + xenobioticSide 2.. It carries out the reaction urate(in) + ATP + H2O = urate(out) + ADP + phosphate + H(+). It catalyses the reaction indoxyl sulfate(in) + ATP + H2O = indoxyl sulfate(out) + ADP + phosphate + H(+). The enzyme catalyses sphing-4-enine 1-phosphate(in) + ATP + H2O = sphing-4-enine 1-phosphate(out) + ADP + phosphate + H(+). The catalysed reaction is estrone 3-sulfate(in) + ATP + H2O = estrone 3-sulfate(out) + ADP + phosphate + H(+). It carries out the reaction dehydroepiandrosterone 3-sulfate(in) + ATP + H2O = dehydroepiandrosterone 3-sulfate(out) + ADP + phosphate + H(+). It catalyses the reaction 4-methylumbelliferone sulfate(in) + ATP + H2O = 4-methylumbelliferone sulfate(out) + ADP + phosphate + H(+). The enzyme catalyses 5,7-dimethyl-2-methylamino-4-(3-pyridylmethyl)-1,3-benzothiazol-6-yl beta-D-glucuronate(in) + ATP + H2O = 5,7-dimethyl-2-methylamino-4-(3-pyridylmethyl)-1,3-benzothiazol-6-yl beta-D-glucuronate(out) + ADP + phosphate + H(+). The catalysed reaction is 4-methylumbelliferone beta-D-glucuronate(in) + ATP + H2O = 4-methylumbelliferone beta-D-glucuronate(out) + ADP + phosphate + H(+). It carries out the reaction 5,7-dimethyl-2-methylamino-4-(3-pyridylmethyl)-1,3-benzothiazol-6-yl sulfate(in) + ATP + H2O = 5,7-dimethyl-2-methylamino-4-(3-pyridylmethyl)-1,3-benzothiazol-6-yl sulfate(out) + ADP + phosphate + H(+). It catalyses the reaction 17beta-estradiol 17-O-(beta-D-glucuronate)(in) + ATP + H2O = 17beta-estradiol 17-O-(beta-D-glucuronate)(out) + ADP + phosphate + H(+). The enzyme catalyses methotrexate(in) + ATP + H2O = methotrexate(out) + ADP + phosphate + H(+). The catalysed reaction is riboflavin(in) + ATP + H2O = riboflavin(out) + ADP + phosphate + H(+). It carries out the reaction pheophorbide a(in) + ATP + H2O = pheophorbide a(out) + ADP + phosphate + H(+). It catalyses the reaction itaconate(in) + ATP + H2O = itaconate(out) + ADP + phosphate + H(+). Its function is as follows. Broad substrate specificity ATP-dependent transporter of the ATP-binding cassette (ABC) family that actively extrudes a wide variety of physiological compounds, dietary toxins and xenobiotics from cells. Involved in porphyrin homeostasis, mediating the export of protoporphyrin IX (PPIX) from both mitochondria to cytosol and cytosol to extracellular space, it also functions in the cellular export of heme. Also mediates the efflux of sphingosine-1-P from cells. Acts as a urate exporter functioning in both renal and extrarenal urate excretion. In kidney, it also functions as a physiological exporter of the uremic toxin indoxyl sulfate. Also involved in the excretion of steroids like estrone 3-sulfate/E1S, 3beta-sulfooxy-androst-5-en-17-one/DHEAS, and other sulfate conjugates. Mediates the secretion of the riboflavin and biotin vitamins into milk. Extrudes pheophorbide a, a phototoxic porphyrin catabolite of chlorophyll, reducing its bioavailability. Plays an important role in the exclusion of xenobiotics from the brain. It confers to cells a resistance to multiple drugs and other xenobiotics including mitoxantrone, pheophorbide, camptothecin, methotrexate, azidothymidine, and the anthracyclines daunorubicin and doxorubicin, through the control of their efflux. In placenta, it limits the penetration of drugs from the maternal plasma into the fetus. May play a role in early stem cell self-renewal by blocking differentiation. In inflammatory macrophages, exports itaconate from the cytosol to the extracellular compartment and limits the activation of TFEB-dependent lysosome biogenesis involved in antibacterial innate immune response. This chain is Broad substrate specificity ATP-binding cassette transporter ABCG2 (Abcg2), found in Rattus norvegicus (Rat).